Consider the following 198-residue polypeptide: Superoxide dismutase [Mn], mitochondrial (198 aa).

Histidine 26 provides a ligand contact to Mn(2+). A 3'-nitrotyrosine modification is found at tyrosine 34. An N6-acetyllysine; alternate mark is found at lysine 44 and lysine 51. N6-succinyllysine; alternate occurs at positions 44 and 51. Residue histidine 74 coordinates Mn(2+). Lysine 90 carries the N6-acetyllysine modification. 2 positions are modified to N6-acetyllysine; alternate: lysine 98 and lysine 106. N6-succinyllysine; alternate occurs at positions 98 and 106. Aspartate 159 and histidine 163 together coordinate Mn(2+). Lysine 178 is modified (N6-acetyllysine).

The protein belongs to the iron/manganese superoxide dismutase family. In terms of assembly, homotetramer. The cofactor is Mn(2+). Nitrated under oxidative stress. Nitration coupled with oxidation inhibits the catalytic activity. Post-translationally, acetylation at Lys-98 decreases enzymatic activity. Deacetylated by SIRT3 upon exposure to ionizing radiations or after long fasting. In terms of processing, polyubiquitinated; leading to proteasomal degradation. Deubiquitinated by USP36 which increases protein stability.

It localises to the mitochondrion matrix. The catalysed reaction is 2 superoxide + 2 H(+) = H2O2 + O2. Functionally, destroys superoxide anion radicals which are normally produced within the cells and which are toxic to biological systems. This Callithrix jacchus (White-tufted-ear marmoset) protein is Superoxide dismutase [Mn], mitochondrial (SOD2).